We begin with the raw amino-acid sequence, 92 residues long: Large ribosomal subunit protein uL23 (92 aa).

This sequence belongs to the universal ribosomal protein uL23 family. Part of the 50S ribosomal subunit. Contacts protein L29, and trigger factor when it is bound to the ribosome.

Its function is as follows. One of the early assembly proteins it binds 23S rRNA. One of the proteins that surrounds the polypeptide exit tunnel on the outside of the ribosome. Forms the main docking site for trigger factor binding to the ribosome. This is Large ribosomal subunit protein uL23 from Bdellovibrio bacteriovorus (strain ATCC 15356 / DSM 50701 / NCIMB 9529 / HD100).